The primary structure comprises 303 residues: Nucleotide-binding protein Dvul_1502 (303 aa).

ATP is bound at residue 23–30; that stretch reads GLSGAGKS. Residue 75–78 participates in GTP binding; it reads DLRE.

This sequence belongs to the RapZ-like family.

Its function is as follows. Displays ATPase and GTPase activities. The polypeptide is Nucleotide-binding protein Dvul_1502 (Nitratidesulfovibrio vulgaris (strain DP4) (Desulfovibrio vulgaris)).